A 128-amino-acid polypeptide reads, in one-letter code: Small ribosomal subunit protein uS11 (128 aa).

It belongs to the universal ribosomal protein uS11 family. Part of the 30S ribosomal subunit. Interacts with proteins S7 and S18. Binds to IF-3.

Functionally, located on the platform of the 30S subunit, it bridges several disparate RNA helices of the 16S rRNA. Forms part of the Shine-Dalgarno cleft in the 70S ribosome. The polypeptide is Small ribosomal subunit protein uS11 (Onion yellows phytoplasma (strain OY-M)).